The following is a 362-amino-acid chain: 3-dehydroquinate synthase (362 aa).

NAD(+) contacts are provided by residues 71–76 (DGEQYK), 105–109 (GVVGD), 129–130 (TT), K142, K151, and 169–172 (CLKT). The Zn(2+) site is built by E184, H248, and H265.

It belongs to the sugar phosphate cyclases superfamily. Dehydroquinate synthase family. Co(2+) serves as cofactor. The cofactor is Zn(2+). NAD(+) is required as a cofactor.

It localises to the cytoplasm. It catalyses the reaction 7-phospho-2-dehydro-3-deoxy-D-arabino-heptonate = 3-dehydroquinate + phosphate. It participates in metabolic intermediate biosynthesis; chorismate biosynthesis; chorismate from D-erythrose 4-phosphate and phosphoenolpyruvate: step 2/7. Functionally, catalyzes the conversion of 3-deoxy-D-arabino-heptulosonate 7-phosphate (DAHP) to dehydroquinate (DHQ). The polypeptide is 3-dehydroquinate synthase (Yersinia pseudotuberculosis serotype O:1b (strain IP 31758)).